The chain runs to 917 residues: MLNNLLKKVFGSRNDRLIKQYSQNVTAINALEAKIGALSDAELRGKTEEFRQRIGEGADLDMLLPEAFAVVREAGKRVLGMRHFDVQLIGGMVLHDGKIAEMRTGEGKTLMATLPAYLNALAGKGVHLVTVNDYLAKRDAEWMGRIYRFLGISVGVILSQMDHGDKQAAYAADITYGTNNEYGFDYLRDNMVTHPLERVQRVLNFAIVDEVDSILIDEARTPLIISGQAEGNTDVYVRMNALIPKLVRQENEDSPGDFSVDEKAQQVLLSEAGFEHAEKLLVQSGLLPSGTSLYDPANINLVHHLYAGLRAHALFHRDQHYVIQNGEVVIVDEFTGRLMAGRRWSEGLHQAVEAKEGVTIQKENQTLASITFQNYFRMYEKLAGMTGTADTEAYEFQQIYGLETVIIPTHRPMIRVDRMDQVFRTMDEKYQAIIADIKDCQERGQPVLVGTTSIENNELLSSLLTREKLPHQVLNAKQHAREAEIVAQAGRPKMITIATNMAGRGTDIVLGGNPEPEFERIRSDESLSESEKTERIAELQQQWQTLHDEVLEKGGLHIIGTERHESRRVDNQLRGRSGRQGDPGSSRFYLSLEDALLRIFASDRVASIMQRLNMPQGEAIEHPWVTRAIENAQRKVEARNFDIRKQLLEYDDVANDQRKVIYQQRNELLESEDITETTTAMRADMLRNLIALHVPPQSVEEEWDISGLEKALAAEYHLTLPLREWLEKEPDLHEDSLHQRIIEAANALYSGKVEQVGAPIMHQYERAVMLQSLDMHWREHLASLDHLRQGIHLRGYAQKNPKQEYKREAFELFTSMLEEIKAEVSKTLMAVQIRSEQQVEAVAETHHAPVNVQYHHAAFEEALGEEKSPESIGEDIEGREHPQKHQPFVRQGEKIGRNDPCPCGSGKKYKQCHGKLN.

ATP contacts are provided by residues glutamine 87, 105–109, and aspartate 507; that span reads GEGKT. Residues 866–917 are disordered; sequence EKSPESIGEDIEGREHPQKHQPFVRQGEKIGRNDPCPCGSGKKYKQCHGKLN. Zn(2+)-binding residues include cysteine 901, cysteine 903, cysteine 912, and histidine 913. Positions 907-917 are enriched in basic residues; it reads KKYKQCHGKLN.

The protein belongs to the SecA family. As to quaternary structure, monomer and homodimer. Part of the essential Sec protein translocation apparatus which comprises SecA, SecYEG and auxiliary proteins SecDF-YajC and YidC. It depends on Zn(2+) as a cofactor.

It localises to the cell inner membrane. The protein resides in the cytoplasm. The enzyme catalyses ATP + H2O + cellular proteinSide 1 = ADP + phosphate + cellular proteinSide 2.. In terms of biological role, part of the Sec protein translocase complex. Interacts with the SecYEG preprotein conducting channel. Has a central role in coupling the hydrolysis of ATP to the transfer of proteins into and across the cell membrane, serving both as a receptor for the preprotein-SecB complex and as an ATP-driven molecular motor driving the stepwise translocation of polypeptide chains across the membrane. This is Protein translocase subunit SecA 1 from Nitrosospira multiformis (strain ATCC 25196 / NCIMB 11849 / C 71).